A 475-amino-acid chain; its full sequence is Ribulose bisphosphate carboxylase large chain (475 aa).

Positions 1–2 are excised as a propeptide; the sequence is MS. Pro3 carries the post-translational modification N-acetylproline. Lys14 is modified (N6,N6,N6-trimethyllysine). 2 residues coordinate substrate: Asn123 and Thr173. Lys175 serves as the catalytic Proton acceptor. Lys177 provides a ligand contact to substrate. Lys201, Asp203, and Glu204 together coordinate Mg(2+). Lys201 carries the post-translational modification N6-carboxylysine. His294 serves as the catalytic Proton acceptor. 3 residues coordinate substrate: Arg295, His327, and Ser379.

The protein belongs to the RuBisCO large chain family. Type I subfamily. In terms of assembly, heterohexadecamer of 8 large chains and 8 small chains; disulfide-linked. The disulfide link is formed within the large subunit homodimers. Mg(2+) is required as a cofactor. The disulfide bond which can form in the large chain dimeric partners within the hexadecamer appears to be associated with oxidative stress and protein turnover.

The protein localises to the plastid. Its subcellular location is the chloroplast. The enzyme catalyses 2 (2R)-3-phosphoglycerate + 2 H(+) = D-ribulose 1,5-bisphosphate + CO2 + H2O. It carries out the reaction D-ribulose 1,5-bisphosphate + O2 = 2-phosphoglycolate + (2R)-3-phosphoglycerate + 2 H(+). Its function is as follows. RuBisCO catalyzes two reactions: the carboxylation of D-ribulose 1,5-bisphosphate, the primary event in carbon dioxide fixation, as well as the oxidative fragmentation of the pentose substrate in the photorespiration process. Both reactions occur simultaneously and in competition at the same active site. The protein is Ribulose bisphosphate carboxylase large chain of Plumbago auriculata (Cape leadwort).